Consider the following 2273-residue polypeptide: Acetyl-CoA carboxylase, mitochondrial (2273 aa).

The transit peptide at 1–104 (KGKTITHGQS…RGNIHKHTRL (104 aa)) directs the protein to the mitochondrion. Residues 134–635 (VISKILIANN…STGWLDDLIL (502 aa)) enclose the Biotin carboxylation domain. The 193-residue stretch at 292 to 484 (KTNFVSVPDD…LPATQLQIAM (193 aa)) folds into the ATP-grasp domain. Position 332–337 (332–337 (GGGGKG)) interacts with ATP. The active site involves arginine 459. The 75-residue stretch at 763-837 (LEAELNPTQV…EAGDVIAKLT (75 aa)) folds into the Biotinyl-binding domain. Lysine 804 is modified (N6-biotinyllysine). The CoA carboxyltransferase N-terminal domain occupies 1532-1867 (PYSVKDWLQP…KRDMSPPLLE (336 aa)). Residues 1532–2187 (PYSVKDWLQP…EGQVIKRLQK (656 aa)) are carboxyltransferase. Positions 1776, 2080, and 2082 each coordinate CoA. In terms of domain architecture, CoA carboxyltransferase C-terminal spans 1871–2187 (RWDRDVDFKP…EGQVIKRLQK (317 aa)).

It depends on biotin as a cofactor.

It is found in the mitochondrion. The catalysed reaction is hydrogencarbonate + acetyl-CoA + ATP = malonyl-CoA + ADP + phosphate + H(+). It catalyses the reaction N(6)-biotinyl-L-lysyl-[protein] + hydrogencarbonate + ATP = N(6)-carboxybiotinyl-L-lysyl-[protein] + ADP + phosphate + H(+). It participates in lipid metabolism; malonyl-CoA biosynthesis; malonyl-CoA from acetyl-CoA: step 1/1. In terms of biological role, catalyzes the rate-limiting reaction in the mitochondrial fatty acid synthesis (FAS) type II pathway. Responsible for the production of the mitochondrial malonyl-CoA, used for the biosynthesis of the cofactor lipoic acid. This protein carries three functions: biotin carboxyl carrier protein, biotin carboxylase, and carboxyltransferase. The chain is Acetyl-CoA carboxylase, mitochondrial (HFA1) from Saccharomyces cerevisiae (strain RM11-1a) (Baker's yeast).